Here is a 437-residue protein sequence, read N- to C-terminus: Nuclear hormone receptor family member nhr-28 (437 aa).

The segment at residues 5 to 80 (KSPCSVCGEA…VGMRKSAVQR (76 aa)) is a DNA-binding region (nuclear receptor). NR C4-type zinc fingers lie at residues 8-28 (CSVC…CRAC) and 44-68 (CRAM…FTKC). Residues 115–376 (YEETGMPTLS…ETFYELVSGR (262 aa)) form the NR LBD domain.

This sequence belongs to the nuclear hormone receptor family. Expressed in the pharynx, intestine and hypodermis.

The protein localises to the nucleus. Functionally, orphan nuclear receptor. In Caenorhabditis elegans, this protein is Nuclear hormone receptor family member nhr-28 (nhr-28).